Here is a 560-residue protein sequence, read N- to C-terminus: CTP synthase (560 aa).

An amidoligase domain region spans residues 1–272 (MSIGDVCSAR…DTQILSHFGM (272 aa)). S20 is a binding site for CTP. Residue S20 participates in UTP binding. ATP contacts are provided by residues 21–26 (SLGKGL) and D78. Positions 78 and 146 each coordinate Mg(2+). Residues 153–155 (DIE), 193–198 (KTKPTQ), and K229 contribute to the CTP site. Residues 193–198 (KTKPTQ) and K229 contribute to the UTP site. The Glutamine amidotransferase type-1 domain maps to 297–539 (TIAIIGKYTK…VQNVLQIKQR (243 aa)). G356 is an L-glutamine binding site. The active-site Nucleophile; for glutamine hydrolysis is the C383. L-glutamine-binding positions include 384–387 (MGMQ), E407, and R467. Catalysis depends on residues H512 and E514.

The protein belongs to the CTP synthase family. In terms of assembly, homotetramer.

It carries out the reaction UTP + L-glutamine + ATP + H2O = CTP + L-glutamate + ADP + phosphate + 2 H(+). The enzyme catalyses L-glutamine + H2O = L-glutamate + NH4(+). The catalysed reaction is UTP + NH4(+) + ATP = CTP + ADP + phosphate + 2 H(+). Its pathway is pyrimidine metabolism; CTP biosynthesis via de novo pathway; CTP from UDP: step 2/2. Its activity is regulated as follows. Allosterically activated by GTP, when glutamine is the substrate; GTP has no effect on the reaction when ammonia is the substrate. The allosteric effector GTP functions by stabilizing the protein conformation that binds the tetrahedral intermediate(s) formed during glutamine hydrolysis. Inhibited by the product CTP, via allosteric rather than competitive inhibition. Its function is as follows. Catalyzes the ATP-dependent amination of UTP to CTP with either L-glutamine or ammonia as the source of nitrogen. Regulates intracellular CTP levels through interactions with the four ribonucleotide triphosphates. The protein is CTP synthase of Anaplasma marginale (strain Florida).